The sequence spans 817 residues: MQEHYEPDALERQAQTWWDEHQTFRAREDAPGEPFYCLSMFPYPSGRLHMGHVRNYTIGDVISRYQRMQGRNVLQPMGWDAFGLPAENAAIKHLVPPAKWTYENIAYMRGQLQRLGFGYDWDRELATCRPEYYRWEQWLFTRLVKKGLAYKKTAMVNWDPVDQTVLANEQVIDGKGWRSGAPVERREIPQWFLRITDYAEELLKGLDGLEGWPEQVRTMQRNWIGRSEGVELEFEVPGEAPLTVYTTRPDTLMGVSYVGVAPEHPLAARAAEGDGKLAAFIEACRHTKVSEADMATLEKKGMDTGLKAVHPVTGEPVPVWVANFVLMEYGTGAVMAVPAHDQRDWEFARQYGLPVRQVILPAEEGVAVDLDQAAFTDKGVLIESAQFNGLSSAQAFDAIADFLEKQHKGRRRVNYRLRDWGVSRQRYWGCPIPIINCPDCGPVPVPEEQLPVVLPEDVAFDGVGSPIKRMPEFIDTTCPECGGKAERETDTFDTFFESSWYYARYTCKDADGAMLDERARHWLPVDQYIGGIEHAVLHLLYARFFHKLMRDEGLVDGDEPFTRLLTQGMVLKDGAKMSKSKGNTVDPEALIERYGADTVRLFMMFAAPPELSLEWSDSGVEGAYRFLKRLWKQVHDHVQGGAAPALDKAALNADQQALRRKLHQTLAKVSDDIGRRTTFNTAIAACMELMNELGRFEDKSGQGRAVMQEALETTVLMLSPIVPHIAHALWSELGREGAAVDQPWPVVDESALESDTVELVVQVNGKLRAQIQVPAAAARAAIEEAALADENVQRHIEGKTVVKMVVVPGRLVNVVVK.

Residues 42–52 carry the 'HIGH' region motif; sequence PYPSGRLHMGH. Positions 576–580 match the 'KMSKS' region motif; sequence KMSKS. Residue lysine 579 participates in ATP binding.

It belongs to the class-I aminoacyl-tRNA synthetase family.

Its subcellular location is the cytoplasm. It catalyses the reaction tRNA(Leu) + L-leucine + ATP = L-leucyl-tRNA(Leu) + AMP + diphosphate. The sequence is that of Leucine--tRNA ligase from Thioalkalivibrio sulfidiphilus (strain HL-EbGR7).